A 571-amino-acid polypeptide reads, in one-letter code: Podocalyxin (571 aa).

Residues 1 to 22 form the signal peptide; that stretch reads MRPAPPPPLLLLLLLLPPPSLS. Residues 23 to 474 lie on the Extracellular side of the membrane; the sequence is HDGTIIAATS…EETEDRFSMP (452 aa). A disordered region spans residues 94 to 361; that stretch reads NTVIAPDQDE…QGDDRIKCES (268 aa). The segment covering 106–116 has biased composition (polar residues); it reads STNPTIATSDS. N-linked (GlcNAc...) asparagine glycosylation is present at asparagine 123. Polar residues-rich tracts occupy residues 126–144, 151–169, 176–203, and 218–245; these read ILPS…TQTA, NPGT…QTTS, KPSS…STTL, and TASS…SSVT. The N-linked (GlcNAc...) asparagine glycan is linked to asparagine 199. The span at 282–300 shows a compositional bias: low complexity; sequence TTSLPSETESLESPSSESP. Pro residues predominate over residues 301-311; the sequence is SQPPKLRPTGP. The span at 312–322 shows a compositional bias: low complexity; sequence PSSGSSGPAAS. 2 N-linked (GlcNAc...) asparagine glycosylation sites follow: asparagine 373 and asparagine 383. A helical membrane pass occupies residues 475 to 495; it reads LIITIVCMASFLLLVAALYGC. Topologically, residues 496–571 are cytoplasmic; the sequence is CHQRLSQRKD…DLDEEEDTHL (76 aa). The residue at position 531 (threonine 531) is a Phosphothreonine. A Phosphoserine modification is found at serine 550. Residue threonine 569 is modified to Phosphothreonine.

It belongs to the podocalyxin family. Found in a complex with EZR, PODXL and NHERF2. Associates with the actin cytoskeleton through complex formation with EZR and NHERF2. Interacts (via the C-terminal PDZ-binding motif DTHL) with NHERF1 (via the PDZ domains); interaction is not detected in glomerular epithelium cells. Interacts (via the C-terminal PDZ-binding motif DTHL) with NHERF2 (via the PDZ 1 domain); interaction is detected in glomerular epithelium cells. Interacts with EZR. Monomer; when associated with the membrane raft. Oligomer; when integrated in the apical membrane. Interacts with NHERF2. Interacts (via the C-terminal PDZ-binding motif DTHL) with NHERF1 (via the PDZ domains); the interaction take place early in the secretory pathway and is necessary for its apical membrane sorting. Post-translationally, N- and O-linked glycosylated. Sialoglycoprotein. As to expression, expressed in glomerular and tubular epithelial cells and peritubular capillaries of the kidney (at protein level). Expressed in heart, lung, renal cortex and medulla, kidney and muscle.

Its subcellular location is the apical cell membrane. It is found in the membrane raft. The protein resides in the cell projection. It localises to the lamellipodium. The protein localises to the filopodium. Its subcellular location is the ruffle. It is found in the microvillus. The protein resides in the membrane. In terms of biological role, involved in the regulation of both adhesion and cell morphology and cancer progression. Functions as an anti-adhesive molecule that maintains an open filtration pathway between neighboring foot processes in the podocyte by charge repulsion. Acts as a pro-adhesive molecule, enhancing the adherence of cells to immobilized ligands, increasing the rate of migration and cell-cell contacts in an integrin-dependent manner. Induces the formation of apical actin-dependent microvilli. Involved in the formation of a preapical plasma membrane subdomain to set up initial epithelial polarization and the apical lumen formation during renal tubulogenesis. Plays a role in cancer development and aggressiveness by inducing cell migration and invasion through its interaction with the actin-binding protein EZR. Affects EZR-dependent signaling events, leading to increased activities of the MAPK and PI3K pathways in cancer cells. This chain is Podocalyxin (PODXL), found in Canis lupus familiaris (Dog).